The sequence spans 757 residues: Centrosomal protein of 68 kDa (757 aa).

2 stretches are compositionally biased toward basic and acidic residues: residues M1–K17 and A86–E96. Disordered regions lie at residues M1–A47, W67–A158, Q192–A259, P311–D480, P509–P551, and L597–Q618. Polar residues predominate over residues L125–C144. Low complexity-rich tracts occupy residues Q192–S206 and V224–V240. Residue S332 is modified to Phosphoserine; by PLK1. The segment covering F339–P355 has biased composition (polar residues). Basic and acidic residues-rich tracts occupy residues G405–D432 and R439–T456. Over residues S457–E467 the composition is skewed to polar residues. Residues S472 and S478 each carry the phosphoserine modification. A compositionally biased stretch (low complexity) spans S524–A543.

In terms of assembly, interacts with CNTLN; the interaction recruits CEP68 to the centrosome. Interacts with the SCF(FBXW11) complex which contains SKP1, CUL1 and FBXW11; the interaction is probably mediated by FBXW11 and the complex also contains CDK5RAP2 and PCNT. Also interacts with F-box protein BTRC. Interacts with serine/threonine-protein kinase PLK1; the interaction leads to phosphorylation of CEP68 and its subsequent degradation. Interacts with NEK2; the interaction leads to phosphorylation of CEP68. Post-translationally, phosphorylation by PLK1 is required for binding to BTRC in prometaphase. Phosphorylated directly or indirectly by NEK2. NEK2-mediated phosphorylation promotes CEP68 dissociation from the centrosome and its degradation at the onset of mitosis. Ubiquitinated and targeted for proteasomal degradation in early mitosis by the SCF(BTRC) and/or SCF(FBXW11) E3 ubiquitin-protein ligase complexes. Degradation is complete by prometaphase and is required for removal of CDK5RAP2 from the peripheral pericentriolar material and subsequent centriole separation.

It is found in the cytoplasm. The protein resides in the cytoskeleton. The protein localises to the microtubule organizing center. It localises to the centrosome. Functionally, involved in maintenance of centrosome cohesion, probably as part of a linker structure which prevents centrosome splitting. Required for localization of CDK5RAP2 to the centrosome during interphase. Contributes to CROCC/rootletin filament formation. This chain is Centrosomal protein of 68 kDa (CEP68), found in Homo sapiens (Human).